Here is a 66-residue protein sequence, read N- to C-terminus: Large ribosomal subunit protein uL29 (66 aa).

The protein belongs to the universal ribosomal protein uL29 family.

The protein is Large ribosomal subunit protein uL29 of Thermoplasma volcanium (strain ATCC 51530 / DSM 4299 / JCM 9571 / NBRC 15438 / GSS1).